A 620-amino-acid polypeptide reads, in one-letter code: UPF0313 protein BT_0254 (620 aa).

The Radical SAM core domain occupies 311–591 (AYDMIKFSVN…AQRQFFFWYK (281 aa)). [4Fe-4S] cluster contacts are provided by Cys-325, Cys-329, and Cys-332.

It belongs to the UPF0313 family. Requires [4Fe-4S] cluster as cofactor.

This chain is UPF0313 protein BT_0254, found in Bacteroides thetaiotaomicron (strain ATCC 29148 / DSM 2079 / JCM 5827 / CCUG 10774 / NCTC 10582 / VPI-5482 / E50).